Here is a 3432-residue protein sequence, read N- to C-terminus: Genome polyprotein (3432 aa).

The tract at residues 2–15 is interaction with host EXOC1; it reads TKKPGGPGKNRAIN. The Cytoplasmic segment spans residues 2-109; that stretch reads TKKPGGPGKN…KKQNKRGGNE (108 aa). A hydrophobic; homodimerization of capsid protein C region spans residues 37–72; the sequence is LLDGRGPVRFVLALITFFKFTALAPTKALLGRWRAV. A propeptide spans 106 to 127 (ER anchor for the capsid protein C, removed in mature form by serine protease NS3); that stretch reads GGNESSIMWLASLAIVIACAGA. A helical transmembrane segment spans residues 110-130; sequence SSIMWLASLAIVIACAGAMKL. The Extracellular portion of the chain corresponds to 131 to 253; sequence SNFQGKLLMT…ATRYLMKTEN (123 aa). N-linked (GlcNAc...) asparagine; by host glycosylation occurs at asparagine 142. Residues 254–274 form a helical membrane-spanning segment; that stretch reads WIIRNPGYAFLAAALGWMLGS. At 275 to 279 the chain is on the cytoplasmic side; it reads NSGQR. A helical transmembrane segment spans residues 280-294; sequence VVFTILLLLVAPAYS. Topologically, residues 295–746 are extracellular; that stretch reads FNCLGMGNRD…QVFGGAFRTL (452 aa). 6 disulfides stabilise this stretch: cysteine 297–cysteine 324, cysteine 354–cysteine 410, cysteine 354–cysteine 415, cysteine 368–cysteine 399, cysteine 386–cysteine 410, and cysteine 386–cysteine 415. Residues 392–405 are fusion peptide; sequence DRGWGNGCGLFGKG. N-linked (GlcNAc...) asparagine; by host glycosylation occurs at asparagine 448. Cystine bridges form between cysteine 484-cysteine 581 and cysteine 598-cysteine 629. A helical transmembrane segment spans residues 747-767; sequence FGGMSWITQGLMGALLLWMGV. Topologically, residues 768 to 773 are cytoplasmic; the sequence is NARDRS. Residues 774–794 traverse the membrane as a helical segment; sequence IALAFLATGGVLVFLATNVHA. Residues 795–1219 lie on the Extracellular side of the membrane; sequence DTGCAIDITR…AFAEANSGGD (425 aa). Disulfide bonds link cysteine 798–cysteine 809, cysteine 849–cysteine 937, cysteine 973–cysteine 1017, cysteine 1074–cysteine 1123, cysteine 1085–cysteine 1106, and cysteine 1107–cysteine 1110. Asparagine 924 and asparagine 1001 each carry an N-linked (GlcNAc...) asparagine; by host glycan. Residues 1220–1240 form a helical membrane-spanning segment; the sequence is VLHLALIAVFKIQPAFLVMNM. Topologically, residues 1241–1250 are cytoplasmic; it reads LSARWTNQEN. Residues 1251–1271 traverse the membrane as a helical segment; sequence MVLVLGAAFFQLASVDLQIGV. Histidine 1272 is a topological domain (lumenal). A helical membrane pass occupies residues 1273–1293; sequence GILNAAAIAWMIVRAITFPTT. Residues 1294–1309 lie on the Cytoplasmic side of the membrane; that stretch reads STVAMPVLALLTPGMR. The helical transmembrane segment at 1310–1330 threads the bilayer; sequence ALYLDTYRIILLVIGICSLLQ. At 1331-1341 the chain is on the lumenal side; sequence ERRKTMAKKKG. Residues 1342–1362 form a helical membrane-spanning segment; the sequence is AVLLGLALTSTGWFSPTTIAA. Over 1363–1374 the chain is Cytoplasmic; that stretch reads GLMVCNPNKKRG. Residues 1375-1395 traverse the membrane as a helical segment; the sequence is WPATEFLSAVGLMFAIVGGLA. The Lumenal segment spans residues 1396 to 1398; the sequence is ELD. A helical transmembrane segment spans residues 1399-1419; that stretch reads IESMSIPFMLAGLMAVSYVIS. Residues 1420 to 1476 are Cytoplasmic-facing; sequence GKATDMWLDRAADISWEMEAAITGSSRRLDVKLDDDGDFHLIDDPGVPWKVWLLRMS. The tract at residues 1427 to 1466 is interacts with and activates NS3 protease; sequence LDRAADISWEMEAAITGSSRRLDVKLDDDGDFHLIDDPGV. The helical intramembrane region spans 1477–1497; it reads CIGLAALTPWAIVPAAFGYWL. Residues 1498–2173 are Cytoplasmic-facing; that stretch reads TLKTTKRGGV…RMALEELPDA (676 aa). In terms of domain architecture, Peptidase S7 spans 1505–1682; that stretch reads GGVFWDTPSP…DRQEEPVPDA (178 aa). Residues histidine 1555, aspartate 1579, and serine 1639 each act as charge relay system; for serine protease NS3 activity in the active site. The 157-residue stretch at 1685 to 1841 folds into the Helicase ATP-binding domain; that stretch reads PSMLKKRQMT…DSNAPIHDLQ (157 aa). Residues 1689 to 1692 form an important for RNA-binding region; it reads KKRQ. 1698 to 1705 is an ATP binding site; the sequence is LHPGSGKT. The DEAH box signature appears at 1789 to 1792; the sequence is DEAH. The 166-residue stretch at 1852-2017 folds into the Helicase C-terminal domain; that stretch reads GYEWITEYAG…GLVAQLYGPE (166 aa). At lysine 1893 the chain carries N6-acetyllysine; by host. Positions 1950–1969 are disordered; sequence NPSPITSASAAQRRGRVGRN. The interval 2168 to 2172 is regulates the ATPase activity of NS3 helicase; that stretch reads EELPD. A helical membrane pass occupies residues 2174 to 2194; it reads LETITLIVAITVMTGGFFLLM. At 2195 to 2199 the chain is on the lumenal side; it reads MQRKG. An intramembrane region (helical) is located at residues 2200–2220; sequence IGKMGLGALVLTLATFFLWAA. Residue glutamate 2221 is a topological domain, lumenal. Residues 2222-2242 traverse the membrane as a helical segment; it reads VPGTKIAGTLLVALLLMVVLI. Over 2243–2257 the chain is Cytoplasmic; it reads PEPEKQRSQTDNQLA. Residues 2258–2278 traverse the membrane as a helical segment; the sequence is VFLICVLTVVGVVAANEYGML. Over 2279–2311 the chain is Lumenal; that stretch reads EKTKADLKSMFGGRTQAPGLTGLPSMALDLRPA. Positions 2312-2332 form an intramembrane region, helical; it reads TAWALYGGSTVVLTPLLKHLI. Residues 2333–2368 are Lumenal-facing; sequence TSEYVTTSLASISSQAGSLFVLPRGVPFTDLDLTVG. The helical transmembrane segment at 2369–2389 threads the bilayer; the sequence is LVFLGCWGQITLTTFLTAMVL. The Cytoplasmic portion of the chain corresponds to 2390 to 2444; it reads VTLHYGYMLPGWQAEALRAAQRRTAAGIMKNAVVDGMVATDVPELERTTPLMQKK. The chain crosses the membrane as a helical span at residues 2445 to 2465; the sequence is VGQVLLIGVSVAAFLVNPNVT. Residues 2466 to 2469 are Lumenal-facing; it reads TVRE. A helical transmembrane segment spans residues 2470–2490; the sequence is AGVLVTAATLTLWDNGASAVW. The Cytoplasmic portion of the chain corresponds to 2491-3432; sequence NSTTATGLCH…DVLIQEDRVI (942 aa). Residues 2528-2793 enclose the mRNA cap 0-1 NS5-type MT domain; the sequence is GRPGGRTLGE…DVNLGSGTRA (266 aa). Serine 2583 contributes to the S-adenosyl-L-methionine binding site. Serine 2583 carries the post-translational modification Phosphoserine. Lysine 2588 functions as the For 2'-O-MTase activity in the catalytic mechanism. Residues glycine 2613, tryptophan 2614, threonine 2631, lysine 2632, aspartate 2658, and valine 2659 each coordinate S-adenosyl-L-methionine. Aspartate 2673 functions as the For 2'-O-MTase activity in the catalytic mechanism. Isoleucine 2674 serves as a coordination point for S-adenosyl-L-methionine. Catalysis depends on for 2'-O-MTase activity residues lysine 2709 and glutamate 2745. Tyrosine 2747 is an S-adenosyl-L-methionine binding site. Zn(2+) is bound by residues glutamate 2967, histidine 2971, cysteine 2976, and cysteine 2979. The 153-residue stretch at 3057-3209 folds into the RdRp catalytic domain; the sequence is GKMYADDTAG…KPLDDRFATA (153 aa). The Zn(2+) site is built by histidine 3244, cysteine 3260, and cysteine 3379.

This sequence in the N-terminal section; belongs to the class I-like SAM-binding methyltransferase superfamily. mRNA cap 0-1 NS5-type methyltransferase family. In terms of assembly, homodimer. Interacts (via N-terminus) with host EXOC1 (via C-terminus); this interaction results in EXOC1 degradation through the proteasome degradation pathway. As to quaternary structure, forms heterodimers with envelope protein E in the endoplasmic reticulum and Golgi. Homodimer; in the endoplasmic reticulum and Golgi. Interacts with protein prM. Interacts with non-structural protein 1. Interacts with host HSPA5. In terms of assembly, homodimer; Homohexamer when secreted. Interacts with envelope protein E. NS1 interacts with NS4B. Interacts with host complement protein CFH; this interaction leads to the degradation of C3. As to quaternary structure, interacts (via N-terminus) with serine protease NS3. Forms a heterodimer with serine protease NS3. May form homooligomers. In terms of assembly, forms a heterodimer with NS2B. Interacts with non-structural protein 2A (via N-terminus). Interacts with NS4B. Interacts with unphosphorylated RNA-directed RNA polymerase NS5; this interaction stimulates RNA-directed RNA polymerase NS5 guanylyltransferase activity. Interacts with host ILF2. As to quaternary structure, interacts with serine protease NS3. Homodimer. Interacts with host STAT2; this interaction inhibits the phosphorylation of the latter, and, when all viral proteins are present (polyprotein), targets STAT2 for degradation. Interacts with serine protease NS3. Mn(2+) serves as cofactor. The cofactor is Mg(2+). Specific enzymatic cleavages in vivo yield mature proteins. Cleavages in the lumen of endoplasmic reticulum are performed by host signal peptidase, whereas cleavages in the cytoplasmic side are performed by serine protease NS3. Signal cleavage at the 2K-4B site requires a prior NS3 protease-mediated cleavage at the 4A-2K site. Post-translationally, cleaved in post-Golgi vesicles by a host furin, releasing the mature small envelope protein M, and peptide pr. This cleavage is incomplete as up to 30% of viral particles still carry uncleaved prM. In terms of processing, N-glycosylated. N-glycosylated. The excreted form is glycosylated and this is required for efficient secretion of the protein from infected cells. Post-translationally, acetylated by host KAT5. Acetylation modulates NS3 RNA-binding and unwinding activities and plays an important positive role for viral replication. In terms of processing, phosphorylated on serines residues. This phosphorylation may trigger NS5 nuclear localization.

It is found in the host endoplasmic reticulum membrane. It localises to the virion. The protein localises to the host nucleus. Its subcellular location is the host cytoplasm. The protein resides in the host perinuclear region. It is found in the secreted. It localises to the virion membrane. The protein localises to the host cell surface. The enzyme catalyses Selective hydrolysis of -Xaa-Xaa-|-Yaa- bonds in which each of the Xaa can be either Arg or Lys and Yaa can be either Ser or Ala.. It carries out the reaction a ribonucleoside 5'-triphosphate + H2O = a ribonucleoside 5'-diphosphate + phosphate + H(+). It catalyses the reaction RNA(n) + a ribonucleoside 5'-triphosphate = RNA(n+1) + diphosphate. The catalysed reaction is ATP + H2O = ADP + phosphate + H(+). The enzyme catalyses a 5'-end (5'-triphosphoguanosine)-ribonucleoside in mRNA + S-adenosyl-L-methionine = a 5'-end (N(7)-methyl 5'-triphosphoguanosine)-ribonucleoside in mRNA + S-adenosyl-L-homocysteine. It carries out the reaction a 5'-end (N(7)-methyl 5'-triphosphoguanosine)-ribonucleoside in mRNA + S-adenosyl-L-methionine = a 5'-end (N(7)-methyl 5'-triphosphoguanosine)-(2'-O-methyl-ribonucleoside) in mRNA + S-adenosyl-L-homocysteine + H(+). In terms of biological role, plays a role in virus budding by binding to the cell membrane and gathering the viral RNA into a nucleocapsid that forms the core of a mature virus particle. During virus entry, may induce genome penetration into the host cytoplasm after hemifusion induced by the surface proteins. Can migrate to the cell nucleus where it modulates host functions. Overcomes the anti-viral effects of host EXOC1 by sequestering and degrading the latter through the proteasome degradation pathway. Its function is as follows. Inhibits RNA silencing by interfering with host Dicer. Prevents premature fusion activity of envelope proteins in trans-Golgi by binding to envelope protein E at pH6.0. After virion release in extracellular space, gets dissociated from E dimers. Functionally, acts as a chaperone for envelope protein E during intracellular virion assembly by masking and inactivating envelope protein E fusion peptide. prM is the only viral peptide matured by host furin in the trans-Golgi network probably to avoid catastrophic activation of the viral fusion activity in acidic Golgi compartment prior to virion release. prM-E cleavage is inefficient, and many virions are only partially matured. These uncleaved prM would play a role in immune evasion. In terms of biological role, may play a role in virus budding. Exerts cytotoxic effects by activating a mitochondrial apoptotic pathway through M ectodomain. May display a viroporin activity. Its function is as follows. Binds to host cell surface receptor and mediates fusion between viral and cellular membranes. Efficient virus attachment to cell is, at least in part, mediated by host HSPA5. Envelope protein is synthesized in the endoplasmic reticulum in the form of heterodimer with protein prM. They play a role in virion budding in the ER, and the newly formed immature particle is covered with 60 spikes composed of heterodimer between precursor prM and envelope protein E. The virion is transported to the Golgi apparatus where the low pH causes dissociation of PrM-E heterodimers and formation of E homodimers. prM-E cleavage is inefficient, and many virions are only partially matured. These uncleaved prM would play a role in immune evasion. Involved in immune evasion, pathogenesis and viral replication. Once cleaved off the polyprotein, is targeted to three destinations: the viral replication cycle, the plasma membrane and the extracellular compartment. Essential for viral replication. Required for formation of the replication complex and recruitment of other non-structural proteins to the ER-derived membrane structures. Excreted as a hexameric lipoparticle that plays a role against host immune response. Antagonizing the complement function. Binds to the host macrophages and dendritic cells. Inhibits signal transduction originating from Toll-like receptor 3 (TLR3). Functionally, component of the viral RNA replication complex that functions in virion assembly and antagonizes the host alpha/beta interferon antiviral response. In terms of biological role, required cofactor for the serine protease function of NS3. May have membrane-destabilizing activity and form viroporins. Its function is as follows. Displays three enzymatic activities: serine protease, NTPase and RNA helicase. NS3 serine protease, in association with NS2B, performs its autocleavage and cleaves the polyprotein at dibasic sites in the cytoplasm: C-prM, NS2A-NS2B, NS2B-NS3, NS3-NS4A, NS4A-2K and NS4B-NS5. NS3 RNA helicase binds RNA and unwinds dsRNA in the 3' to 5' direction. Regulates the ATPase activity of the NS3 helicase activity. NS4A allows NS3 helicase to conserve energy during unwinding. Functionally, functions as a signal peptide for NS4B and is required for the interferon antagonism activity of the latter. In terms of biological role, induces the formation of ER-derived membrane vesicles where the viral replication takes place. Inhibits interferon (IFN)-induced host STAT1 phosphorylation and nuclear translocation, thereby preventing the establishment of cellular antiviral state by blocking the IFN-alpha/beta pathway. Inhibits STAT2 translocation in the nucleus after IFN-alpha treatment. Its function is as follows. Replicates the viral (+) and (-) RNA genome. Performs the capping of genomes in the cytoplasm. NS5 methylates viral RNA cap at guanine N-7 and ribose 2'-O positions. Besides its role in RNA genome replication, also prevents the establishment of cellular antiviral state by blocking the interferon-alpha/beta (IFN-alpha/beta) signaling pathway. Inhibits host TYK2 and STAT2 phosphorylation, thereby preventing activation of JAK-STAT signaling pathway. The polypeptide is Genome polyprotein (Japanese encephalitis virus (strain M28) (JEV)).